We begin with the raw amino-acid sequence, 377 residues long: UDP-N-acetylglucosamine--N-acetylmuramyl-(pentapeptide) pyrophosphoryl-undecaprenol N-acetylglucosamine transferase (377 aa).

UDP-N-acetyl-alpha-D-glucosamine-binding positions include 11–13 (TGG), N123, R164, S194, and Q295.

The protein belongs to the glycosyltransferase 28 family. MurG subfamily.

It is found in the cell inner membrane. The catalysed reaction is di-trans,octa-cis-undecaprenyl diphospho-N-acetyl-alpha-D-muramoyl-L-alanyl-D-glutamyl-meso-2,6-diaminopimeloyl-D-alanyl-D-alanine + UDP-N-acetyl-alpha-D-glucosamine = di-trans,octa-cis-undecaprenyl diphospho-[N-acetyl-alpha-D-glucosaminyl-(1-&gt;4)]-N-acetyl-alpha-D-muramoyl-L-alanyl-D-glutamyl-meso-2,6-diaminopimeloyl-D-alanyl-D-alanine + UDP + H(+). It participates in cell wall biogenesis; peptidoglycan biosynthesis. Cell wall formation. Catalyzes the transfer of a GlcNAc subunit on undecaprenyl-pyrophosphoryl-MurNAc-pentapeptide (lipid intermediate I) to form undecaprenyl-pyrophosphoryl-MurNAc-(pentapeptide)GlcNAc (lipid intermediate II). The sequence is that of UDP-N-acetylglucosamine--N-acetylmuramyl-(pentapeptide) pyrophosphoryl-undecaprenol N-acetylglucosamine transferase from Opitutus terrae (strain DSM 11246 / JCM 15787 / PB90-1).